Here is a 402-residue protein sequence, read N- to C-terminus: uncharacterized protein (402 aa).

Helical transmembrane passes span 23–43, 52–72, 90–110, 121–141, 158–178, 180–200, 228–248, 255–275, 282–302, 309–329, 351–371, and 375–395; these read IVSVVMFTFIGYLTIGIPLAV, LGYGSVLAGLVISLQYLATLL, VLYGMAGSAASGLFMLLSVAI, LLVGRLVLGAAESLVGSAAIG, WNGIASYGAIALGAPLGVLLV, WLGLWSMGASIVLLGALGFAL, GMGLALGAIGFGTIATFITLY, ANAVLCLSAFGGCFIGARLLF, LGGFRVAIICLGVESLGLLLL, WVGLAGAALTGFGFSLVFPAF, LFVDLSLGITGPLVGFVANLF, and SMFLFACLASLGGLALAVALH.

The protein belongs to the major facilitator superfamily. YhhS family.

The protein resides in the cell inner membrane. This is an uncharacterized protein from Pseudomonas aeruginosa (strain ATCC 15692 / DSM 22644 / CIP 104116 / JCM 14847 / LMG 12228 / 1C / PRS 101 / PAO1).